A 124-amino-acid chain; its full sequence is Glycine cleavage system H protein (124 aa).

The Lipoyl-binding domain occupies 19 to 101 (VATVGITDHA…ESGAWFFRMT (83 aa)). Lys-60 bears the N6-lipoyllysine mark.

This sequence belongs to the GcvH family. The glycine cleavage system is composed of four proteins: P, T, L and H. The cofactor is (R)-lipoate.

The glycine cleavage system catalyzes the degradation of glycine. The H protein shuttles the methylamine group of glycine from the P protein to the T protein. This chain is Glycine cleavage system H protein, found in Acidiphilium cryptum (strain JF-5).